We begin with the raw amino-acid sequence, 476 residues long: Sulfate adenylyltransferase subunit 1 (476 aa).

The region spanning 24–241 is the tr-type G domain; sequence KSLLRFLTCG…EDVDFVQEQE (218 aa). Positions 33-40 are G1; it reads GSVDDGKS. 33–40 provides a ligand contact to GTP; it reads GSVDDGKS. The interval 91–95 is G2; sequence GITID. The interval 112 to 115 is G3; it reads DTPG. GTP-binding positions include 112–116 and 167–170; these read DTPGH and NKMD. A G4 region spans residues 167–170; the sequence is NKMD. A G5 region spans residues 205-207; that stretch reads SAL.

The protein belongs to the TRAFAC class translation factor GTPase superfamily. Classic translation factor GTPase family. CysN/NodQ subfamily. In terms of assembly, heterodimer composed of CysD, the smaller subunit, and CysN.

It carries out the reaction sulfate + ATP + H(+) = adenosine 5'-phosphosulfate + diphosphate. It participates in sulfur metabolism; hydrogen sulfide biosynthesis; sulfite from sulfate: step 1/3. In terms of biological role, with CysD forms the ATP sulfurylase (ATPS) that catalyzes the adenylation of sulfate producing adenosine 5'-phosphosulfate (APS) and diphosphate, the first enzymatic step in sulfur assimilation pathway. APS synthesis involves the formation of a high-energy phosphoric-sulfuric acid anhydride bond driven by GTP hydrolysis by CysN coupled to ATP hydrolysis by CysD. The protein is Sulfate adenylyltransferase subunit 1 of Photobacterium profundum (strain SS9).